Reading from the N-terminus, the 558-residue chain is Podocalyxin (558 aa).

Residues 1–22 (MRCALALSALLLLLSTPPLLPS) form the signal peptide. The span at 20-29 (LPSSPSPSPS) shows a compositional bias: pro residues. 3 disordered regions span residues 20 to 50 (LPSSPSPSPSPSQNATQTTTDSSNKTAPTPA), 83 to 210 (LGVS…DHLM), and 270 to 338 (SVIS…VAHE). At 23 to 461 (SPSPSPSPSQ…EEAEDRFSMP (439 aa)) the chain is on the extracellular side. Polar residues-rich tracts occupy residues 32–50 (QNATQTTTDSSNKTAPTPA) and 83–107 (LGVSSDSPGTTTLAQQVSGPVNTTV). Residues Asn33, Asn43, and Asn104 are each glycosylated (N-linked (GlcNAc...) asparagine). The segment covering 125-142 (STKSADTTTVATSTATAK) has biased composition (low complexity). Composition is skewed to polar residues over residues 143-173 (PNTTSSQNGAEDTTNSGGKSSHSVTTDLTST), 190-204 (RQPTSTHPVATPTSS), and 270-302 (SVISQRTQQTSSQMPASSTAPSSQETVQPTSPA). Asn144 is a glycosylation site (N-linked (GlcNAc...) asparagine). Residues 313 to 324 (TMSSSPTAASTT) show a composition bias toward low complexity. Asn360 carries an N-linked (GlcNAc...) asparagine glycan. The helical transmembrane segment at 462–482 (LIITIVCMASFLLLVAALYGC) threads the bilayer. Over 483 to 558 (CHQRLSQRKD…DLDEEEDTHL (76 aa)) the chain is Cytoplasmic. Residue Thr518 is modified to Phosphothreonine. Residues Ser529 and Ser537 each carry the phosphoserine modification. Thr556 is subject to Phosphothreonine.

The protein belongs to the podocalyxin family. In terms of assembly, monomer; when associated with the membrane raft. Oligomer; when integrated in the apical membrane. Interacts (via the C-terminal PDZ-binding motif DTHL) with NHERF1 (via the PDZ domains); the interaction is not detected in glomerular epithelium cells, take place early in the secretory pathway and is necessary for its apical membrane sorting. Found in a complex with EZR, PODXL and NHERF2. Associates with the actin cytoskeleton through complex formation with EZR and NHERF2. Interacts (via the C-terminal PDZ-binding motif DTHL) with NHERF2 (via the PDZ 1 domain); interaction is detected in glomerular epithelium cells. Interacts with EZR. Post-translationally, N- and O-linked glycosylated. Sialoglycoprotein. As to expression, glomerular epithelium cell (podocyte).

It is found in the apical cell membrane. Its subcellular location is the cell projection. The protein localises to the lamellipodium. The protein resides in the filopodium. It localises to the ruffle. It is found in the microvillus. Its subcellular location is the membrane raft. The protein localises to the membrane. Functionally, involved in the regulation of both adhesion and cell morphology and cancer progression. Functions as an anti-adhesive molecule that maintains an open filtration pathway between neighboring foot processes in the podocyte by charge repulsion. Acts as a pro-adhesive molecule, enhancing the adherence of cells to immobilized ligands, increasing the rate of migration and cell-cell contacts in an integrin-dependent manner. Induces the formation of apical actin-dependent microvilli. Involved in the formation of a preapical plasma membrane subdomain to set up initial epithelial polarization and the apical lumen formation during renal tubulogenesis. Plays a role in cancer development and aggressiveness by inducing cell migration and invasion through its interaction with the actin-binding protein EZR. Affects EZR-dependent signaling events, leading to increased activities of the MAPK and PI3K pathways in cancer cells. This chain is Podocalyxin (PODXL), found in Homo sapiens (Human).